A 382-amino-acid polypeptide reads, in one-letter code: Transforming growth factor beta-1 proprotein (382 aa).

Residues 1–20 form the signal peptide; sequence MRAVCLMLTALLMLEYVCRS. A straightjacket domain region spans residues 23-68; the sequence is MSTCKSLDLELVKRKRIEAIRGQILSKLRLPKEPEIDQEGDTEEVP. The segment at 69–264 is arm domain; it reads ASLMSIYNST…SLPVERHSQL (196 aa). 3 N-linked (GlcNAc...) asparagine glycosylation sites follow: Asn76, Asn116, and Asn125. A bowtie tail region spans residues 218-243; it reads GKPMEEFRFKISGMNKLRGNTETLAM. Positions 235–237 match the Cell attachment site motif; that stretch reads RGN. 4 disulfides stabilise this stretch: Cys278-Cys286, Cys285-Cys348, Cys314-Cys379, and Cys318-Cys381.

The protein belongs to the TGF-beta family. Latency-associated peptide: Homodimer; disulfide-linked. Latency-associated peptide: Interacts with Transforming growth factor beta-1 (TGF-beta-1) chain; interaction is non-covalent and maintains (TGF-beta-1) in a latent state; each Latency-associated peptide (LAP) monomer interacts with TGF-beta-1 in the other monomer. Transforming growth factor beta-1: Homodimer; disulfide-linked. Transforming growth factor beta-1: Interacts with TGF-beta receptors (tgfbr1 and tgfbr2), leading to signal transduction. Interacts with EFEMP2. Transforming growth factor beta-1 proprotein: The precursor proprotein is cleaved in the Golgi apparatus to form Transforming growth factor beta-1 (TGF-beta-1) and Latency-associated peptide (LAP) chains, which remain non-covalently linked, rendering TGF-beta-1 inactive. In terms of tissue distribution, expressed in blood leukocytes, kidney macrophages, brain, gill and spleen but not in liver.

It is found in the secreted. Its subcellular location is the extracellular space. The protein localises to the extracellular matrix. Transforming growth factor beta-1 proprotein: Precursor of the Latency-associated peptide (LAP) and Transforming growth factor beta-1 (TGF-beta-1) chains, which constitute the regulatory and active subunit of TGF-beta-1, respectively. Its function is as follows. Required to maintain the Transforming growth factor beta-1 (TGF-beta-1) chain in a latent state during storage in extracellular matrix. Associates non-covalently with TGF-beta-1 and regulates its activation via interaction with 'milieu molecules', such as LTBP1, LRRC32/GARP and LRRC33/NRROS, that control activation of TGF-beta-1. Interaction with integrins (ITGAV:ITGB6 or ITGAV:ITGB8) results in distortion of the Latency-associated peptide chain and subsequent release of the active TGF-beta-1. Functionally, transforming growth factor beta-1: Multifunctional protein that regulates the growth and differentiation of various cell types and is involved in various processes, such as normal development, immune function, microglia function and responses to neurodegeneration. Activation into mature form follows different steps: following cleavage of the proprotein in the Golgi apparatus, Latency-associated peptide (LAP) and Transforming growth factor beta-1 (TGF-beta-1) chains remain non-covalently linked rendering TGF-beta-1 inactive during storage in extracellular matrix. At the same time, LAP chain interacts with 'milieu molecules', such as ltbp1, lrrc32/garp and lrrc33/nrros that control activation of TGF-beta-1 and maintain it in a latent state during storage in extracellular milieus. TGF-beta-1 is released from LAP by integrins (ITGAV:ITGB6 or ITGAV:ITGB8): integrin-binding to LAP stabilizes an alternative conformation of the LAP bowtie tail and results in distortion of the LAP chain and subsequent release of the active TGF-beta-1. Once activated following release of LAP, TGF-beta-1 acts by binding to TGF-beta receptors (tgfbr1 and tgfbr2), which transduce signal. While expressed by many cells types, TGF-beta-1 only has a very localized range of action within cell environment thanks to fine regulation of its activation by Latency-associated peptide chain (LAP) and 'milieu molecules'. Plays an important role in bone remodeling: acts as a potent stimulator of osteoblastic bone formation. Can promote either T-helper 17 cells (Th17) or regulatory T-cells (Treg) lineage differentiation in a concentration-dependent manner. Can induce epithelial-to-mesenchymal transition (EMT) and cell migration in various cell types. The sequence is that of Transforming growth factor beta-1 proprotein (tgfb1) from Oncorhynchus mykiss (Rainbow trout).